The sequence spans 432 residues: Glutamate-1-semialdehyde 2,1-aminomutase (432 aa).

Lysine 271 is subject to N6-(pyridoxal phosphate)lysine.

Belongs to the class-III pyridoxal-phosphate-dependent aminotransferase family. HemL subfamily. In terms of assembly, homodimer. It depends on pyridoxal 5'-phosphate as a cofactor.

It is found in the cytoplasm. The enzyme catalyses (S)-4-amino-5-oxopentanoate = 5-aminolevulinate. The protein operates within porphyrin-containing compound metabolism; protoporphyrin-IX biosynthesis; 5-aminolevulinate from L-glutamyl-tRNA(Glu): step 2/2. Its pathway is porphyrin-containing compound metabolism; chlorophyll biosynthesis. The protein is Glutamate-1-semialdehyde 2,1-aminomutase of Prochlorococcus marinus (strain NATL2A).